A 334-amino-acid chain; its full sequence is DNA-directed RNA polymerase subunit alpha (334 aa).

The interval 1-232 (MIREKLKVST…DLFIPFLHAE (232 aa)) is alpha N-terminal domain (alpha-NTD). Residues 267 to 334 (QKEITLKSIF…NILQIENHFV (68 aa)) form an alpha C-terminal domain (alpha-CTD) region.

This sequence belongs to the RNA polymerase alpha chain family. In terms of assembly, in plastids the minimal PEP RNA polymerase catalytic core is composed of four subunits: alpha, beta, beta', and beta''. When a (nuclear-encoded) sigma factor is associated with the core the holoenzyme is formed, which can initiate transcription.

The protein resides in the plastid. It is found in the chloroplast. It carries out the reaction RNA(n) + a ribonucleoside 5'-triphosphate = RNA(n+1) + diphosphate. DNA-dependent RNA polymerase catalyzes the transcription of DNA into RNA using the four ribonucleoside triphosphates as substrates. This chain is DNA-directed RNA polymerase subunit alpha, found in Pisum sativum (Garden pea).